The sequence spans 153 residues: Replicase large subunit (153 aa).

The protein belongs to the tobamovirus RNA-directed RNA polymerase family.

The enzyme catalyses RNA(n) + a ribonucleoside 5'-triphosphate = RNA(n+1) + diphosphate. Its function is as follows. The replicase large subunit is an RNA-dependent RNA polymerase active in viral RNA replication. This Citrullus (Cucumber) protein is Replicase large subunit.